Consider the following 343-residue polypeptide: UBP1-associated proteins 1A (343 aa).

The tract at residues 1–61 (MAKTLDKSKK…SESDNEFDPE (61 aa)) is disordered. Over residues 28-49 (NKQQQQPESSTPYSSSSSSSDS) the composition is skewed to low complexity. The segment covering 50-61 (SDSESDNEFDPE) has biased composition (acidic residues). The 78-residue stretch at 104–181 (RKIFVYGLPW…RTATCQLASM (78 aa)) folds into the RRM domain. Residues 312-343 (STYPDSDAGGKRGTGKDSDAGGSSFHGYSNYS) form a disordered region. The segment covering 319-330 (AGGKRGTGKDSD) has biased composition (basic and acidic residues).

Interacts with UBA1A, UBA2A, UBP1A, UBP1B and UBP1C.

The protein resides in the nucleus. Functionally, acts as a component of a complex regulating the turnover of mRNAs in the nucleus. Binds with high affinity to RNA molecules that contain U-rich sequences in 3'-UTRs. May function in complex with UBP1 and contribute to the stabilization of mRNAs in the nucleus. However, unlike UBP1, UBA1A does not stimulate pre-mRNA splicing. The sequence is that of UBP1-associated proteins 1A (UBA1A) from Arabidopsis thaliana (Mouse-ear cress).